We begin with the raw amino-acid sequence, 217 residues long: Probable GTP-binding protein EngB (217 aa).

One can recognise an EngB-type G domain in the interval 27-201; it reads EGIEVAFAGR…REKLDTWFSE (175 aa). GTP-binding positions include 35–42, 62–66, 80–83, 147–150, and 180–182; these read GRSNAGKS, GRTQL, DLPG, TKAD, and FSS. Mg(2+) is bound by residues Ser-42 and Thr-64.

The protein belongs to the TRAFAC class TrmE-Era-EngA-EngB-Septin-like GTPase superfamily. EngB GTPase family. Mg(2+) is required as a cofactor.

Functionally, necessary for normal cell division and for the maintenance of normal septation. This chain is Probable GTP-binding protein EngB, found in Yersinia enterocolitica serotype O:8 / biotype 1B (strain NCTC 13174 / 8081).